The following is a 246-amino-acid chain: tRNA (guanine-N(1)-)-methyltransferase (246 aa).

Residues G117 and 137 to 142 (IGDYVL) each bind S-adenosyl-L-methionine.

Belongs to the RNA methyltransferase TrmD family. In terms of assembly, homodimer.

Its subcellular location is the cytoplasm. The catalysed reaction is guanosine(37) in tRNA + S-adenosyl-L-methionine = N(1)-methylguanosine(37) in tRNA + S-adenosyl-L-homocysteine + H(+). Specifically methylates guanosine-37 in various tRNAs. The protein is tRNA (guanine-N(1)-)-methyltransferase of Acinetobacter baumannii (strain SDF).